The primary structure comprises 567 residues: MPHETLLDNQGWFKKLARRFGPGHVVNTCFLIVMLFSTLLTWREVMILKDAYVASQRNHLGSVANVLDRQLQFNMDRLIFLRNGMHEALVAPLAFSALQSAVTQFEQRRVRHFWQLELDKRRTLPLYGVSDQFVARTTLLSRESRDLANELTATLELGYLARSSAMLTLETMYVSRSGFYLSTLPTAYGSDIVSRYYQYVTQPWFIEQSQRRNPQRGVRWFTSAQPYVADEQKKVTASLPLDHDNYWYGVLAMDIPVASLQQFLRDAAEKDIEGEYQLYDNHLRLLTDSAPEQQTENTLNDRERALLAREIEKDTLGGLRLGTHYVSWERLDHFDGVLLRVHTLREGIQGNFGSISIALTLLWGLFTAMLLISWGVIRHMVKNMFVLQNSPQWQAWHDPLTRLYNRGALFEKASRLAKRYREARQPFSVIQLDLDYFKSVNDRFGHQAGDRVLSHAAGLIGSTIRAHDIAGRVGGEEFCIVLPGATKAQALQIAERIRQRINDKEILVTKSTTLRISASMGISSAEEYGDYDFEQLQSLADKRLYYAKQSGRNRICASDATQEREKK.

2 helical membrane-spanning segments follow: residues 20-40 (FGPGHVVNTCFLIVMLFSTLL) and 357-377 (IALTLLWGLFTAMLLISWGVI). The GGDEF domain occupies 425 to 560 (QPFSVIQLDL…GRNRICASDA (136 aa)). Residue D433 coordinates Mg(2+). 3 residues coordinate substrate: N441, H446, and D450. E476 serves as a coordination point for Mg(2+). Residue E476 is the Proton acceptor of the active site.

As to quaternary structure, homodimer. Mg(2+) is required as a cofactor.

It localises to the cell inner membrane. It carries out the reaction 2 GTP = 3',3'-c-di-GMP + 2 diphosphate. It participates in glycan metabolism; bacterial cellulose biosynthesis. Its pathway is purine metabolism; 3',5'-cyclic di-GMP biosynthesis. Its function is as follows. Catalyzes the synthesis of cyclic-di-GMP (c-di-GMP) via the condensation of 2 GTP molecules. Cyclic-di-GMP is a second messenger which controls cell surface-associated traits in bacteria. Involved in the regulation of cellulose production. The protein is Probable diguanylate cyclase DgcQ of Salmonella typhi.